Reading from the N-terminus, the 110-residue chain is UPF0145 protein (110 aa).

It belongs to the UPF0145 family.

The polypeptide is UPF0145 protein (Listeria ivanovii).